The primary structure comprises 983 residues: Nuclear factor NF-kappa-B p105 subunit (983 aa).

Residues 47 to 372 (PYLQIIEQPK…EVQRKRQKLM (326 aa)) form the RHD domain. C66 is subject to S-nitrosocysteine. Phosphoserine; by PKA is present on S342. The Nuclear localization signal signature appears at 365 to 370 (QRKRQK). The interval 377 to 397 (DGYGGGSGAGGGGMFGGGGGG) is GRR. Residues 423 to 454 (KSNAGMKHELSNSTVKKDEESSDKQSDKWDTK) are disordered. The span at 428–454 (MKHELSNSTVKKDEESSDKQSDKWDTK) shows a compositional bias: basic and acidic residues. ANK repeat units lie at residues 540–569 (NGDNVLHLSIIHLHRELVKNLLEVMPDMNY), 579–608 (LYQTPLHLAVITKQAEVVEDLLKAGANVNL), 612–641 (HGNSVLHLAAAEGDDKILSLLLKHQKASSM), 648–677 (EGLSAIHMVVTANSLSCLKLLIAAGVDVNA), 682–712 (SGRTALHLAVEQENVPLAGCLLLEGDADVDS), 716–745 (DGTTPLHIAAGRGFTKLAAVLKAAGADPHV), and 769–799 (PGTTPLDMAANWEVYDILNGKPYIAAAAVSE). The 88-residue stretch at 804-891 (QGPLRELNES…EAIEVIQKAL (88 aa)) folds into the Death domain. S938 is modified (phosphoserine).

In terms of assembly, active NF-kappa-B is a heterodimer of an about 50 kDa DNA-binding subunit and the weak DNA-binding subunit p65. Two heterodimers might form a labile tetramer. Post-translationally, generation of the NF-kappa-B p50 (Nuclear factor NF-kappa-B p50 subunit) transcription factor takes place both cotranslationally and post-translationally via non-mutually exclusive mechanisms. A cotranslational processing allows the production of both p50 and p105 (Nuclear factor NF-kappa-B p105 subunit) from a single NFKB1 mRNA. While translation occurs, the particular unfolded structure after the GRR repeat region acts as a substrate for the proteasome, promoting degradation of the C-terminus. The GRR acts as a proteasomal 'stop signal', protecting the region upstream of the GRR from degradation and promoting generation of p50. It is unclear if limited proteasome degradation during cotranslational processing depends on ubiquitination. NF-kappa-B p50 is also generated post-translationally following ubiquitination by the KPC complex, leading to limited processing by the proteasome downstream of the GRR region, thereby generating p50. Phosphorylation at the C-terminus by IKBKB/IKKB acts as a signal for ubiquitination and promotes either complete degradation or processing to generate the NF-kappa-B p50 (Nuclear factor NF-kappa-B p50 subunit). Phosphorylation at Ser-938 are required for BTRC/BTRCP-mediated ubiquitination and proteolysis. Phosphorylation at Ser-938 is also required for ubiquitination by the KPC complex and limited processing to generate NF-kappa-B p50 (Nuclear factor NF-kappa-B p50 subunit). In terms of processing, polyubiquitinated at multiple Lys residues in the C-terminus. Polyubiquitinated by the SCF(FBXW11) and SCF(BTRC) complexes following phosphorylation at Ser-938, leading to its complete degradation. In contrast, polyubiquitination by the KPC complex following phosphorylation at Ser-938 leads to limited proteosomal processing and generation of the active NF-kappa-B p50 (Nuclear factor NF-kappa-B p50 subunit). Post-translationally, S-nitrosylation of Cys-66 affects DNA binding. The covalent modification of cysteine by 15-deoxy-Delta12,14-prostaglandin-J2 is autocatalytic and reversible. It may occur as an alternative to other cysteine modifications, such as S-nitrosylation and S-palmitoylation.

The protein resides in the cytoplasm. It is found in the nucleus. P105 is the precursor of the active p50 subunit (Nuclear factor NF-kappa-B p50 subunit) of the nuclear factor NF-kappa-B. The precursor protein itself does not bind to DNA. Acts as a cytoplasmic retention of attached NF-kappa-B proteins by p105. In terms of biological role, constitutes the active form, which associates with RELA/p65 to form the NF-kappa-B p65-p50 complex to form a transcription factor. Together with RELA/p65, binds to the kappa-B consensus sequence 5'-GGRNNYYCC-3', located in the enhancer region of genes involved in immune response and acute phase reactions. This is Nuclear factor NF-kappa-B p105 subunit (NFKB1) from Gallus gallus (Chicken).